The following is a 156-amino-acid chain: Transcription antitermination protein NusB (156 aa).

The protein belongs to the NusB family.

Involved in transcription antitermination. Required for transcription of ribosomal RNA (rRNA) genes. Binds specifically to the boxA antiterminator sequence of the ribosomal RNA (rrn) operons. This is Transcription antitermination protein NusB from Rickettsia felis (strain ATCC VR-1525 / URRWXCal2) (Rickettsia azadi).